A 338-amino-acid chain; its full sequence is Lipoate-protein ligase A (338 aa).

One can recognise a BPL/LPL catalytic domain in the interval 29–216; it reads PATQRVLFLW…AFFAHYGERI (188 aa). ATP is bound by residues Arg-71, 76–79, and Lys-134; that span reads GAVF. Residue Lys-134 coordinates (R)-lipoate.

It belongs to the LplA family. In terms of assembly, monomer.

It localises to the cytoplasm. It catalyses the reaction L-lysyl-[lipoyl-carrier protein] + (R)-lipoate + ATP = N(6)-[(R)-lipoyl]-L-lysyl-[lipoyl-carrier protein] + AMP + diphosphate + H(+). Its pathway is protein modification; protein lipoylation via exogenous pathway; protein N(6)-(lipoyl)lysine from lipoate: step 1/2. It functions in the pathway protein modification; protein lipoylation via exogenous pathway; protein N(6)-(lipoyl)lysine from lipoate: step 2/2. In terms of biological role, catalyzes both the ATP-dependent activation of exogenously supplied lipoate to lipoyl-AMP and the transfer of the activated lipoyl onto the lipoyl domains of lipoate-dependent enzymes. The sequence is that of Lipoate-protein ligase A from Salmonella paratyphi A (strain ATCC 9150 / SARB42).